Here is an 87-residue protein sequence, read N- to C-terminus: NADH-ubiquinone oxidoreductase chain 4L (87 aa).

2 helical membrane-spanning segments follow: residues 22–42 (FLSF…FIIG) and 49–69 (LFLI…SLLV).

This sequence belongs to the complex I subunit 4L family.

It is found in the mitochondrion membrane. The enzyme catalyses a ubiquinone + NADH + 5 H(+)(in) = a ubiquinol + NAD(+) + 4 H(+)(out). Its function is as follows. Core subunit of the mitochondrial membrane respiratory chain NADH dehydrogenase (Complex I) that is believed to belong to the minimal assembly required for catalysis. Complex I functions in the transfer of electrons from NADH to the respiratory chain. The immediate electron acceptor for the enzyme is believed to be ubiquinone. The chain is NADH-ubiquinone oxidoreductase chain 4L (ND4L) from Apis mellifera ligustica (Common honeybee).